The chain runs to 378 residues: UPF0754 membrane protein BALH_0780 (378 aa).

The next 2 membrane-spanning stretches (helical) occupy residues 1–21 and 357–377; these read MNIWLSMLTTTGLGAIIGGFT and YLGALLGGMIGIVQGLLLLFL.

It belongs to the UPF0754 family.

It localises to the cell membrane. This Bacillus thuringiensis (strain Al Hakam) protein is UPF0754 membrane protein BALH_0780.